The following is a 164-amino-acid chain: Cyclic pyranopterin monophosphate synthase (164 aa).

Substrate contacts are provided by residues 75-77 and 116-117; these read MCH and ME. Aspartate 131 is a catalytic residue.

The protein belongs to the MoaC family. As to quaternary structure, homohexamer; trimer of dimers.

It catalyses the reaction (8S)-3',8-cyclo-7,8-dihydroguanosine 5'-triphosphate = cyclic pyranopterin phosphate + diphosphate. It functions in the pathway cofactor biosynthesis; molybdopterin biosynthesis. Functionally, catalyzes the conversion of (8S)-3',8-cyclo-7,8-dihydroguanosine 5'-triphosphate to cyclic pyranopterin monophosphate (cPMP). The sequence is that of Cyclic pyranopterin monophosphate synthase from Staphylococcus aureus (strain MRSA252).